The following is a 398-amino-acid chain: Cysteine protease ATG4A (398 aa).

C77 acts as the Nucleophile in catalysis. Catalysis depends on residues D279 and H281. Residues 393–396 carry the LIR motif; sequence FEIL.

The protein belongs to the peptidase C54 family. In terms of assembly, interacts with ATG9A; the interaction is direct.

It is found in the cytoplasm. The enzyme catalyses [protein]-C-terminal L-amino acid-glycyl-phosphatidylethanolamide + H2O = [protein]-C-terminal L-amino acid-glycine + a 1,2-diacyl-sn-glycero-3-phosphoethanolamine. Inhibited by N-ethylmaleimide. Redox-regulated during autophagy since reducing conditions activate ATG4A whereas an oxidizing environment such as the presence of H(2)O(2) inhibits its activity. Cysteine protease that plays a key role in autophagy by mediating both proteolytic activation and delipidation of ATG8 family proteins. The protease activity is required for proteolytic activation of ATG8 family proteins: cleaves the C-terminal amino acid of ATG8 proteins to reveal a C-terminal glycine. Exposure of the glycine at the C-terminus is essential for ATG8 proteins conjugation to phosphatidylethanolamine (PE) and insertion to membranes, which is necessary for autophagy. Preferred substrate is GABARAPL2 followed by MAP1LC3A and GABARAP. Protease activity is also required to counteract formation of high-molecular weight conjugates of ATG8 proteins (ATG8ylation): acts as a deubiquitinating-like enzyme that removes ATG8 conjugated to other proteins, such as ATG3. In addition to the protease activity, also mediates delipidation of ATG8 family proteins. Catalyzes delipidation of PE-conjugated forms of ATG8 proteins during macroautophagy. Compared to ATG4B, the major protein for proteolytic activation of ATG8 proteins, shows weaker ability to cleave the C-terminal amino acid of ATG8 proteins, while it displays stronger delipidation activity. Involved in phagophore growth during mitophagy independently of its protease activity and of ATG8 proteins: acts by regulating ATG9A trafficking to mitochondria and promoting phagophore-endoplasmic reticulum contacts during the lipid transfer phase of mitophagy. This Homo sapiens (Human) protein is Cysteine protease ATG4A.